Consider the following 203-residue polypeptide: Ribonuclease T (203 aa).

The region spanning 11–185 is the Exonuclease domain; it reads VVVDVETGGF…YDTEKTAELF (175 aa). Mg(2+)-binding residues include D14, E16, H172, and D177. H172 (proton donor/acceptor) is an active-site residue.

This sequence belongs to the RNase T family. As to quaternary structure, homodimer. Requires Mg(2+) as cofactor.

Functionally, trims short 3' overhangs of a variety of RNA species, leaving a one or two nucleotide 3' overhang. Responsible for the end-turnover of tRNA: specifically removes the terminal AMP residue from uncharged tRNA (tRNA-C-C-A). Also appears to be involved in tRNA biosynthesis. The polypeptide is Ribonuclease T (Pseudomonas putida (strain ATCC 47054 / DSM 6125 / CFBP 8728 / NCIMB 11950 / KT2440)).